The chain runs to 547 residues: Chaperonin GroEL (547 aa).

Residues 30–33 (TLGP), lysine 51, 87–91 (DGTTT), glycine 415, 480–482 (NAA), and aspartate 496 each bind ATP.

The protein belongs to the chaperonin (HSP60) family. As to quaternary structure, forms a cylinder of 14 subunits composed of two heptameric rings stacked back-to-back. Interacts with the co-chaperonin GroES.

The protein resides in the cytoplasm. The catalysed reaction is ATP + H2O + a folded polypeptide = ADP + phosphate + an unfolded polypeptide.. Functionally, together with its co-chaperonin GroES, plays an essential role in assisting protein folding. The GroEL-GroES system forms a nano-cage that allows encapsulation of the non-native substrate proteins and provides a physical environment optimized to promote and accelerate protein folding. This chain is Chaperonin GroEL, found in Glaesserella parasuis serovar 5 (strain SH0165) (Haemophilus parasuis).